Here is a 1017-residue protein sequence, read N- to C-terminus: Pikachurin (1017 aa).

A signal peptide spans 1 to 24 (MDLIRGVLLRLLLLASSLGPGAVS). 2 Fibronectin type-III domains span residues 37 to 136 (PPLD…TLSQ) and 144 to 239 (APQQ…TLCP). Asn-47 is a glycosylation site (N-linked (GlcNAc...) asparagine). Residues 343–381 (FDMPCDETLCSADSFCVNDYTWGGSRCQCTLGKGGESCS) enclose the EGF-like 1 domain. 11 disulfides stabilise this stretch: Cys-347–Cys-358, Cys-352–Cys-369, Cys-371–Cys-380, Cys-534–Cys-564, Cys-569–Cys-580, Cys-574–Cys-590, Cys-592–Cys-601, Cys-788–Cys-799, Cys-793–Cys-808, Cys-810–Cys-819, and Cys-987–Cys-1014. The Laminin G-like 1 domain maps to 386 to 564 (IQYPQFFGHS…ALSGADVGEC (179 aa)). EGF-like domains lie at 565 to 602 (SSGI…RHCE) and 784 to 820 (AAHP…LHCQ). The 180-residue stretch at 609–788 (IPQFRESLRS…VNVENAAHPC (180 aa)) folds into the Laminin G-like 2 domain. Residues 835 to 1014 (IEIPQFIGRS…AVDGKNINTC (180 aa)) enclose the Laminin G-like 3 domain.

In terms of assembly, interacts with DAG1 alpha-dystroglycan. Interacts with GPR158 and GPR179; transsynaptic interaction is required for synaptic organization of photoreceptor cells. In terms of processing, O-glycosylated; contains chondroitin sulfate and heparan sulfate.

The protein resides in the secreted. The protein localises to the extracellular space. It localises to the extracellular matrix. It is found in the synaptic cleft. Its subcellular location is the presynaptic active zone. In terms of biological role, involved in both the retinal photoreceptor ribbon synapse formation and physiological functions of visual perception. Plays a key role in the synaptic organization of photoreceptors by mediating transsynaptic interaction between alpha-dystroglycan and GPR179 on the postsynaptic membrane. Necessary for proper bipolar dendritic tip apposition to the photoreceptor ribbon synapse. Promotes matrix assembly and cell adhesiveness. In Homo sapiens (Human), this protein is Pikachurin (EGFLAM).